The chain runs to 383 residues: Succinate--CoA ligase [ADP-forming] subunit beta (383 aa).

In terms of domain architecture, ATP-grasp spans 9–241 (KEVLHKFNVS…YDEEVKEEIE (233 aa)). ATP contacts are provided by residues Lys46, 53 to 55 (GRG), Glu99, Ser102, and Glu107. Asn196 and Asp210 together coordinate Mg(2+). Residues Asn261 and 318 to 320 (GIM) each bind substrate.

Belongs to the succinate/malate CoA ligase beta subunit family. In terms of assembly, heterotetramer of two alpha and two beta subunits. It depends on Mg(2+) as a cofactor.

The catalysed reaction is succinate + ATP + CoA = succinyl-CoA + ADP + phosphate. It carries out the reaction GTP + succinate + CoA = succinyl-CoA + GDP + phosphate. It functions in the pathway carbohydrate metabolism; tricarboxylic acid cycle; succinate from succinyl-CoA (ligase route): step 1/1. Succinyl-CoA synthetase functions in the citric acid cycle (TCA), coupling the hydrolysis of succinyl-CoA to the synthesis of either ATP or GTP and thus represents the only step of substrate-level phosphorylation in the TCA. The beta subunit provides nucleotide specificity of the enzyme and binds the substrate succinate, while the binding sites for coenzyme A and phosphate are found in the alpha subunit. This is Succinate--CoA ligase [ADP-forming] subunit beta from Wolbachia sp. subsp. Drosophila simulans (strain wRi).